A 1611-amino-acid chain; its full sequence is DNA (cytosine-5)-methyltransferase 1 (1611 aa).

The interaction with DMAP1 stretch occupies residues 1 to 120; it reads MPARTAPARV…SQTSGEDCRV (120 aa). Residues 1–148 form an interaction with DNMT3A region; that stretch reads MPARTAPARV…RRSKSDGETK (148 aa). Interaction with the PRC2/EED-EZH2 complex stretches follow at residues 1–334 and 306–603; these read MPAR…TEKK and KPQV…TIRQ. Serine 15 bears the Phosphoserine mark. Positions 16–109 constitute a DMAP1-binding domain; sequence RAFSLPDDVR…SREANGCLEN (94 aa). Lysine 70 carries the N6,N6-dimethyllysine; by EHMT2 modification. The interval 123–328 is disordered; it reads AEKGKPPKPV…EEKRRRTTYR (206 aa). Serine 133 carries the phosphoserine modification. Residue threonine 137 is modified to Phosphothreonine. Phosphoserine is present on serine 141. Residue lysine 142 is modified to N6-methyllysine; by SETD7. Serine 143 is subject to Phosphoserine; by PKB/AKT1. Residues 149 to 216 form an interaction with DNMT3B region; it reads SEVSSSPRIT…TSRERVAGLL (68 aa). Phosphoserine is present on residues serine 152 and serine 154. Lysine 160 carries the post-translational modification N6-acetyllysine. The interaction with PCNA stretch occupies residues 163–174; the sequence is RQTTITSHFPRG. Low complexity predominate over residues 163–174; the sequence is RQTTITSHFPRG. A Phosphothreonine modification is found at threonine 166. The Nuclear localization signal motif lies at 177-204; that stretch reads KRKPEEEPEKVKSDDSVDEEKDQEEKRR. 5 stretches are compositionally biased toward basic and acidic residues: residues 178–191, 199–212, 220–265, 279–311, and 319–328; these read RKPEEEPEKVKSDD, QEEKRRRVTSRERV, EPGR…RDVR, KDEKRHRSQPKDLASKRRPEEKEPERVKPQVSD, and EEKRRRTTYR. At lysine 188 the chain carries N6-acetyllysine. At lysine 257 the chain carries N6-acetyllysine; alternate. Residue lysine 257 forms a Glycyl lysine isopeptide (Lys-Gly) (interchain with G-Cter in SUMO2); alternate linkage. Serine 310 is subject to Phosphoserine. The interval 329-548 is DNA replication foci-targeting sequence; sequence ELTEKKMTRT…NLNRFTEDSL (220 aa). Zn(2+) contacts are provided by cysteine 351 and cysteine 354. Phosphoserine is present on residues serine 392 and serine 396. Residues cysteine 412 and histidine 416 each coordinate Zn(2+). A phosphoserine mark is found at serine 507 and serine 547. Positions 594 to 614 are disordered; sequence RAERRQTIRQPAKEKDKGPTK. Residues 643–689 form a CXXC-type zinc finger; the sequence is NAFKRRRCGVCEICQQPECGKCKACKDMVKFGGSGRSKQACQKRRCP. Residues cysteine 650, cysteine 653, cysteine 656, cysteine 661, cysteine 664, cysteine 667, cysteine 683, and cysteine 688 each contribute to the Zn(2+) site. The segment at 690–751 is autoinhibitory linker; it reads NMAMKEADDD…SYYKKVCIDS (62 aa). The segment at 695–726 is disordered; that stretch reads EADDDEEVDDNIPEMPSPKKMHQGKKKKQNKN. Over residues 696–706 the composition is skewed to acidic residues; sequence ADDDEEVDDNI. Serine 711 bears the Phosphoserine mark. Residues 713–725 are compositionally biased toward basic residues; the sequence is KKMHQGKKKKQNK. Serine 729 is subject to Phosphoserine. Lysine 746 is subject to N6-acetyllysine. The region spanning 752–877 is the BAH 1 domain; that stretch reads ETLEVGDCVS…QDYARFESPP (126 aa). Position 875 is a phosphoserine (serine 875). An N6-acetyllysine mark is found at lysine 888, lysine 954, lysine 958, lysine 972, and lysine 1051. One can recognise a BAH 2 domain in the interval 969–1097; sequence HYRKYSDYIK…AKSKSFEDPP (129 aa). Residues 1091–1126 are disordered; sequence KSFEDPPNHARSTGNKGKGKGKGKNRTKSQTCEPSE. Tandem repeats lie at residues 1106 to 1107, 1108 to 1109, 1110 to 1111, and 1112 to 1113. A 5 X 2 AA tandem repeats of K-G region spans residues 1106–1115; the sequence is KGKGKGKGKN. Residues 1107–1117 are compositionally biased toward basic residues; it reads GKGKGKGKNRT. N6-acetyllysine occurs at positions 1108, 1110, 1112, 1114, and 1118. Residues 1114-1115 form a 5; approximate repeat; that stretch reads KN. Residues 1118 to 1611 are interaction with the PRC2/EED-EZH2 complex; it reads KSQTCEPSEL…AKIKEEAAKD (494 aa). One can recognise an SAM-dependent MTase C5-type domain in the interval 1136-1595; that stretch reads LRTLDVFSGC…LEIKRCMLAK (460 aa). Residues 1136–1611 are catalytic; the sequence is LRTLDVFSGC…AKIKEEAAKD (476 aa). S-adenosyl-L-methionine contacts are provided by residues serine 1143, 1147–1148, 1165–1166, 1187–1188, and cysteine 1188; these read GL, EM, and DC. Cysteine 1223 is an active-site residue. An N6-acetyllysine mark is found at lysine 1346 and lysine 1412. S-adenosyl-L-methionine-binding residues include asparagine 1574 and valine 1576. A Glycyl lysine isopeptide (Lys-Gly) (interchain with G-Cter in SUMO2) cross-link involves residue lysine 1605.

The protein belongs to the class I-like SAM-binding methyltransferase superfamily. C5-methyltransferase family. Homodimer. Forms a stable complex with E2F1, BB1 and HDAC1. Forms a complex with DMAP1 and HDAC2, with direct interaction. Interacts with the PRC2/EED-EZH2 complex. Probably part of a corepressor complex containing ZNF304, TRIM28, SETDB1 and DNMT1. Interacts with UHRF1; promoting its recruitment to hemimethylated DNA. Interacts with USP7, promoting its deubiquitination. Interacts with PCNA. Interacts with MBD2 and MBD3. Interacts with DNMT3A and DNMT3B. Interacts with UBC9. Interacts with CSNK1D. Interacts with HDAC1. Interacts with BAZ2A/TIP5. Interacts with SIRT7. Interacts with ZNF263; recruited to the SIX3 promoter along with other proteins involved in chromatin modification and transcriptional corepression where it contributes to transcriptional repression. Interacts with L3MBTL3 and DCAF5; the interaction requires DNMT1 methylation at Lys-142 and is necessary to target DNMT1 for ubiquitination by the CRL4-DCAF5 E3 ubiquitin ligase complex and proteasomal degradation. Interacts with PHF20L1; the interaction requires DNMT1 methylation at Lys-142 and protects DNMT1 from ubiquitination and proteasomal degradation. Post-translationally, sumoylated; sumoylation increases activity. In terms of processing, acetylation on multiple lysines, mainly by KAT2B/PCAF, regulates cell cycle G(2)/M transition. Deacetylation of Lys-1346 and Lys-1412 by SIRT1 increases methyltransferase activity. Phosphorylation of Ser-154 by CDKs is important for enzymatic activity and protein stability. Phosphorylation of Ser-143 by AKT1 prevents methylation by SETD7 thereby increasing DNMT1 stability. Post-translationally, methylation at Lys-142 by SETD7 is necessary for the regulation of DNMT1 proteasomal degradation. In terms of processing, ubiquitinated by UHRF1; interaction with USP7 counteracts ubiquitination by UHRF1 by promoting deubiquitination and preventing degradation by the proteasome.

Its subcellular location is the nucleus. The catalysed reaction is a 2'-deoxycytidine in DNA + S-adenosyl-L-methionine = a 5-methyl-2'-deoxycytidine in DNA + S-adenosyl-L-homocysteine + H(+). Its function is as follows. Methylates CpG residues. Preferentially methylates hemimethylated DNA. Associates with DNA replication sites in S phase maintaining the methylation pattern in the newly synthesized strand, that is essential for epigenetic inheritance. Associates with chromatin during G2 and M phases to maintain DNA methylation independently of replication. It is responsible for maintaining methylation patterns established in development. DNA methylation is coordinated with methylation of histones. Mediates transcriptional repression by direct binding to HDAC2. In association with DNMT3B and via the recruitment of CTCFL/BORIS, involved in activation of BAG1 gene expression by modulating dimethylation of promoter histone H3 at H3K4 and H3K9. Probably forms a corepressor complex required for activated KRAS-mediated promoter hypermethylation and transcriptional silencing of tumor suppressor genes (TSGs) or other tumor-related genes in colorectal cancer (CRC) cells. Also required to maintain a transcriptionally repressive state of genes in undifferentiated embryonic stem cells (ESCs). Associates at promoter regions of tumor suppressor genes (TSGs) leading to their gene silencing. Promotes tumor growth. The sequence is that of DNA (cytosine-5)-methyltransferase 1 (DNMT1) from Bos taurus (Bovine).